The sequence spans 743 residues: Inhibitor of nuclear factor kappa-B kinase subunit alpha (743 aa).

The region spanning Trp-15 to Met-300 is the Protein kinase domain. Residues Leu-21 to Val-29 and Lys-44 contribute to the ATP site. Asp-144 acts as the Proton acceptor in catalysis. The leucine-zipper stretch occupies residues Leu-453–Leu-474. The NEMO-binding stretch occupies residues Met-736–Leu-741.

The protein belongs to the protein kinase superfamily. Ser/Thr protein kinase family. I-kappa-B kinase subfamily.

Its subcellular location is the cytoplasm. The protein localises to the nucleus. It carries out the reaction L-seryl-[I-kappa-B protein] + ATP = O-phospho-L-seryl-[I-kappa-B protein] + ADP + H(+). With respect to regulation, activated when phosphorylated and inactivated when dephosphorylated. Phosphorylates inhibitors of NF-kappa-B thus leading to the dissociation of the inhibitor/NF-kappa-B complex and ultimately the degradation of the inhibitor. Phosphorylates 'Ser-10' of histone H3 at NF-kappa-B-regulated promoters during inflammatory responses triggered by cytokines. This chain is Inhibitor of nuclear factor kappa-B kinase subunit alpha (chuk), found in Xenopus laevis (African clawed frog).